Here is a 126-residue protein sequence, read N- to C-terminus: Fluoride-specific ion channel FluC 2 (126 aa).

The next 4 membrane-spanning stretches (helical) occupy residues 11–31 (IFLIGAGGFLGAICRFSLCEL), 43–63 (VLGSFMLGLIMYDTEYIGFIG), 69–89 (AFGTGFMGAFTTFSTFAVQSF), and 93–113 (FFPALENISVNLFLALVGVFM). Na(+)-binding residues include G76 and T79.

It belongs to the fluoride channel Fluc/FEX (TC 1.A.43) family.

The protein localises to the cell membrane. It carries out the reaction fluoride(in) = fluoride(out). Its activity is regulated as follows. Na(+) is not transported, but it plays an essential structural role and its presence is essential for fluoride channel function. Functionally, fluoride-specific ion channel. Important for reducing fluoride concentration in the cell, thus reducing its toxicity. This is Fluoride-specific ion channel FluC 2 from Methanosarcina barkeri (strain Fusaro / DSM 804).